Reading from the N-terminus, the 409-residue chain is Peptidase T (409 aa).

Histidine 78 contacts Zn(2+). Residue aspartate 80 is part of the active site. Aspartate 140 provides a ligand contact to Zn(2+). The active-site Proton acceptor is glutamate 174. The Zn(2+) site is built by glutamate 175, aspartate 197, and histidine 379.

This sequence belongs to the peptidase M20B family. Requires Zn(2+) as cofactor.

Its subcellular location is the cytoplasm. It carries out the reaction Release of the N-terminal residue from a tripeptide.. Functionally, cleaves the N-terminal amino acid of tripeptides. The protein is Peptidase T of Aliivibrio salmonicida (strain LFI1238) (Vibrio salmonicida (strain LFI1238)).